The chain runs to 286 residues: MRYIRLCIISLLATLPLAVHASPQPLEQIKLSESQLSGRVGMIEMDLASGRTLTAWRADERFPMMSTFKVVLCGAVLARVDAGDEQLERKIHYRQQDLVDYSPVSEKHLADGMTVGELCAAAITMSDNSAANLLLATVGGPAGLTAFLRQIGDNVTRLDRWETELNEALPGDARDTTTPASMAATLRKLLTSQRLSARSQLQLLQWMVDDRVAGPLIRSVLPAGWFIADKTGASERGARGIVALLGPNNKAERIVVIYLRDTPASMAERNQQIAGIGAALIEHWQR.

An N-terminal signal peptide occupies residues 1 to 21 (MRYIRLCIISLLATLPLAVHA). Ser66 functions as the Acyl-ester intermediate in the catalytic mechanism. A disulfide bond links Cys73 and Cys119. Residue Glu164 is the Proton acceptor of the active site. 230-232 (KTG) contacts substrate.

It belongs to the class-A beta-lactamase family.

The catalysed reaction is a beta-lactam + H2O = a substituted beta-amino acid. Its function is as follows. This enzyme hydrolyzes cefotaxime, ceftazidime and other broad spectrum cephalosporins. The sequence is that of Beta-lactamase SHV-3 (bla) from Klebsiella pneumoniae.